Reading from the N-terminus, the 364-residue chain is DNA polymerase IV (364 aa).

Residues 7–187 (IIHVDMDAFY…LPVNRVPGVG (181 aa)) form the UmuC domain. Asp11 and Asp105 together coordinate Mg(2+). Residue Glu106 is part of the active site.

Belongs to the DNA polymerase type-Y family. As to quaternary structure, monomer. Mg(2+) serves as cofactor.

It localises to the cytoplasm. The catalysed reaction is DNA(n) + a 2'-deoxyribonucleoside 5'-triphosphate = DNA(n+1) + diphosphate. Functionally, poorly processive, error-prone DNA polymerase involved in untargeted mutagenesis. Copies undamaged DNA at stalled replication forks, which arise in vivo from mismatched or misaligned primer ends. These misaligned primers can be extended by PolIV. Exhibits no 3'-5' exonuclease (proofreading) activity. May be involved in translesional synthesis, in conjunction with the beta clamp from PolIII. This is DNA polymerase IV from Stenotrophomonas maltophilia (strain K279a).